The chain runs to 376 residues: Rhodopsin (376 aa).

The Extracellular segment spans residues 1–52 (MSSWSNQPAMDDYGLPSSNPYGNFTVVDMAPKDILHMIHPHWYQYPPMNPMM). N-linked (GlcNAc...) asparagine glycosylation is present at asparagine 23. A helical membrane pass occupies residues 53 to 77 (YPLLLIFMLFTGILCLAGNFVTIWV). The Cytoplasmic portion of the chain corresponds to 78-89 (FMNTKSLRTPAN). A helical transmembrane segment spans residues 90–112 (LLVVNLAMSDFLMMFTMFPPMMV). Residues 113-126 (TCYYHTWTLGPTFC) lie on the Extracellular side of the membrane. An intrachain disulfide couples cysteine 126 to cysteine 203. A helical membrane pass occupies residues 127-149 (QVYAFLGNLCGCASIWTMVFITF). A 'Ionic lock' involved in activated form stabilization motif is present at residues 150 to 152 (DRY). Over 150–168 (DRYNVIVKGVAGEPLSTKK) the chain is Cytoplasmic. A helical membrane pass occupies residues 169–189 (ASLWILTIWVLSITWCIAPFF). Residues 190–216 (GWNRYVPEGNLTGCGTDYLSEDILSRS) lie on the Extracellular side of the membrane. N-linked (GlcNAc...) asparagine glycosylation is present at asparagine 199. Residues 217-237 (YLYDYSTWVYYLPLLPIYCYV) form a helical membrane-spanning segment. The Cytoplasmic segment spans residues 238–278 (SIIKAVAAHEKGMRDQAKKMGIKSLRNEEAQKTSAECRLAK). A helical membrane pass occupies residues 279–300 (IAMTTVALWFIAWTPYLLINWV). Topologically, residues 301-311 (GMFARSYLSPV) are extracellular. A helical transmembrane segment spans residues 312–333 (YTIWGYVFAKANAVYNPIVYAI). Lysine 321 is subject to N6-(retinylidene)lysine. The Cytoplasmic portion of the chain corresponds to 334–376 (SHPKYRAAMEKKLPCLSCKTESDDVSESASTTTSSAEEKAESA). The tract at residues 353-376 (TESDDVSESASTTTSSAEEKAESA) is disordered.

The protein belongs to the G-protein coupled receptor 1 family. Opsin subfamily. Homodimer. Interacts with GNAQ. In terms of processing, contains one covalently linked retinal chromophore. In terms of tissue distribution, detected on rhabdomere membranes on photoreceptor cells in the retina (at protein level).

The protein resides in the cell projection. It localises to the rhabdomere membrane. Photoreceptor required for image-forming vision at low light intensity. Can use both retinal and 3-dehydroretinal as visual pigment. Light-induced isomerization of 11-cis to all-trans retinal triggers a conformational change that activates signaling via G-proteins. Signaling via GNAQ probably mediates the activation of phospholipase C. In Procambarus clarkii (Red swamp crayfish), this protein is Rhodopsin (RHO).